The chain runs to 300 residues: Acetylglutamate kinase (300 aa).

Residues 73-74 (GG), Arg-95, and Asn-197 contribute to the substrate site.

It belongs to the acetylglutamate kinase family. ArgB subfamily.

The protein resides in the cytoplasm. It catalyses the reaction N-acetyl-L-glutamate + ATP = N-acetyl-L-glutamyl 5-phosphate + ADP. It functions in the pathway amino-acid biosynthesis; L-arginine biosynthesis; N(2)-acetyl-L-ornithine from L-glutamate: step 2/4. Functionally, catalyzes the ATP-dependent phosphorylation of N-acetyl-L-glutamate. The sequence is that of Acetylglutamate kinase from Polynucleobacter necessarius subsp. necessarius (strain STIR1).